A 328-amino-acid polypeptide reads, in one-letter code: uncharacterized protein (328 aa).

The segment at 296-328 (APEGDLEDEIIEVDPEQPRDDPYRRLRTPPPGG) is disordered. A compositionally biased stretch (acidic residues) spans 299 to 310 (GDLEDEIIEVDP).

In terms of biological role, possibly necessary for replication. This is an uncharacterized protein from Halobacterium sp. (strain GN101).